The sequence spans 123 residues: Large ribosomal subunit protein bL19 (123 aa).

The protein belongs to the bacterial ribosomal protein bL19 family.

This protein is located at the 30S-50S ribosomal subunit interface and may play a role in the structure and function of the aminoacyl-tRNA binding site. The sequence is that of Large ribosomal subunit protein bL19 from Ruegeria sp. (strain TM1040) (Silicibacter sp.).